Reading from the N-terminus, the 511-residue chain is Cytochrome P450 4A7 (511 aa).

Residues 1–4 constitute a propeptide that is removed on maturation; the sequence is MSVS. Heme contacts are provided by E322 and C458.

Belongs to the cytochrome P450 family. Heme is required as a cofactor. Liver, kidney, small intestine.

Its subcellular location is the endoplasmic reticulum membrane. The protein resides in the microsome membrane. The enzyme catalyses an omega-methyl-long-chain fatty acid + reduced [NADPH--hemoprotein reductase] + O2 = an omega-hydroxy-long-chain fatty acid + oxidized [NADPH--hemoprotein reductase] + H2O + H(+). Cytochromes P450 are a group of heme-thiolate monooxygenases. In liver microsomes, this enzyme is involved in an NADPH-dependent electron transport pathway. It oxidizes a variety of structurally unrelated compounds, including steroids, fatty acids, and xenobiotics. In terms of biological role, the kidney P-450 system is rather specialized for the omega-hydroxylation of fatty acids. Both P450-KA1 and P450-KA2 catalyze the omega- and (omega-1)-hydroxylation of various fatty acids with no drug-metabolizing activity, and hydroxylate prostaglandin A1 and A2 solely at the omega-position. The polypeptide is Cytochrome P450 4A7 (CYP4A7) (Oryctolagus cuniculus (Rabbit)).